The chain runs to 652 residues: ATP-dependent zinc metalloprotease FtsH (652 aa).

The Cytoplasmic portion of the chain corresponds to 1 to 11 (MKKQNNGLIKN). Residues 12 to 32 (PFLWLLFIFFLVTGFQYFYSG) form a helical membrane-spanning segment. The Extracellular portion of the chain corresponds to 33 to 131 (NNSGGSQQIN…EVTVKHESSS (99 aa)). The chain crosses the membrane as a helical span at residues 132-152 (GIWINLLVSIVPFGILFFFLF). The Cytoplasmic portion of the chain corresponds to 153–652 (SMMGNMGGGN…EVKSKMNDEK (500 aa)). 227-234 (GPPGTGKT) contacts ATP. Residue His449 coordinates Zn(2+). Glu450 is an active-site residue. 2 residues coordinate Zn(2+): His453 and Asp525. The tract at residues 628–652 (MPEAVEEESHALSYDEVKSKMNDEK) is disordered. Over residues 634-652 (EESHALSYDEVKSKMNDEK) the composition is skewed to basic and acidic residues.

The protein in the central section; belongs to the AAA ATPase family. In the C-terminal section; belongs to the peptidase M41 family. Homohexamer. Zn(2+) is required as a cofactor.

Its subcellular location is the cell membrane. Its function is as follows. Acts as a processive, ATP-dependent zinc metallopeptidase for both cytoplasmic and membrane proteins. Plays a role in the quality control of integral membrane proteins. The protein is ATP-dependent zinc metalloprotease FtsH of Streptococcus pneumoniae serotype 4 (strain ATCC BAA-334 / TIGR4).